A 942-amino-acid polypeptide reads, in one-letter code: Envelope glycoprotein (942 aa).

The N-terminal stretch at 1-80 (MDAGASYMRL…LLWTNMCVRA (80 aa)) is a signal peptide. Asn51, Asn98, Asn131, Asn176, Asn228, Asn331, Asn348, Asn354, Asn370, Asn379, Asn400, Asn404, Asn435, Asn441, Asn447, Asn457, Asn467, Asn481, Asn493, Asn503, Asn509, Asn527, and Asn534 each carry an N-linked (GlcNAc...) asparagine; by host glycan. Residues 81–799 (EDYITLISDP…SLKEVFDWSG (719 aa)) are Extracellular-facing. The fusion peptide stretch occupies residues 631 to 651 (GVGLVIMLVIMAIVAAAGASL). 2 coiled-coil regions span residues 663-713 (KAAV…RIML) and 754-789 (RELQGYDGNLTMLLRESARQTQLAEEQVRRIPDVWE). The immunosuppression stretch occupies residues 697-713 (LEARVARVEAITDRIML). The chain crosses the membrane as a helical span at residues 800-820 (WFSWLKYIPIIVVGLVGCILI). The Cytoplasmic portion of the chain corresponds to 821 to 942 (RAVICVCQPL…VDCETWGKGD (122 aa)).

In terms of assembly, the mature envelope protein (Env) consists of a trimer of SU-TM heterodimers attached by noncovalent interactions or by a labile interchain disulfide bond. Post-translationally, specific enzymatic cleavages in vivo yield mature proteins. Envelope glycoproteins are synthesized as an inactive precursor that is N-glycosylated and processed likely by host cell furin or by a furin-like protease in the Golgi to yield the mature SU and TM proteins. The cleavage site between SU and TM requires the minimal sequence [KR]-X-[KR]-R.

The protein localises to the virion membrane. It localises to the host cell membrane. The surface protein (SU) attaches the virus to the host cell by binding to its receptor. This interaction triggers the refolding of the transmembrane protein (TM) and is thought to activate its fusogenic potential by unmasking its fusion peptide. Fusion occurs at the host cell plasma membrane. Functionally, the transmembrane protein (TM) acts as a class I viral fusion protein. Under the current model, the protein has at least 3 conformational states: pre-fusion native state, pre-hairpin intermediate state, and post-fusion hairpin state. During viral and target cell membrane fusion, the coiled coil regions (heptad repeats) assume a trimer-of-hairpins structure, positioning the fusion peptide in close proximity to the C-terminal region of the ectodomain. The formation of this structure appears to drive apposition and subsequent fusion of viral and target cell membranes. Membranes fusion leads to delivery of the nucleocapsid into the cytoplasm. In Caprine arthritis encephalitis virus (strain 63) (CAEV-63), this protein is Envelope glycoprotein (env).